The sequence spans 460 residues: MSETEKPVQAAAAAAVAAAGTADVPAVEKDPETTQDKQQSATDNSTTKAPQDEKNKQTENPSTDAPPAAATAPTADPITSAQPPDVDAIEAQKDGQKKNGPGSENKPDETPVDTRPEYLSKNPALSEFFEKLASILKKADHNEMWGVTLKDSDDVPTVNVLIKFLRANEGNVKLAEEQLRKALEWRKKMNPLALAEKATYSSSKFQGLGYVANYKDQNQGKVVFTWNIYGSVKDANRTFGDVDEFIKWRVALMEMAVKDLKLSEATSVIDYSGEDPYQMIQVHDYQNVSFLRLNPTIKSATKQTIDVFSTAYPELLKEKFFVNVPALMGWVFTALKVFLSKNTIRKFHPITNGVNLAREFSFADELPKSYGGKADELAESARTVALRQDTPEPPPESAPPAQASPPTTETNGSAKEVAKTAAEDAKKAEAPVAADAPATISEPEKPAASSANETPSEVAK.

A disordered region spans residues 1–118; that stretch reads MSETEKPVQA…ETPVDTRPEY (118 aa). Low complexity predominate over residues 8 to 25; that stretch reads VQAAAAAAVAAAGTADVP. A compositionally biased stretch (basic and acidic residues) spans 26-35; it reads AVEKDPETTQ. Over residues 36 to 49 the composition is skewed to polar residues; sequence DKQQSATDNSTTKA. Low complexity predominate over residues 61 to 81; it reads PSTDAPPAAATAPTADPITSA. Basic and acidic residues predominate over residues 105–118; it reads NKPDETPVDTRPEY. Residues 198–378 form the CRAL-TRIO domain; that stretch reads ATYSSSKFQG…SYGGKADELA (181 aa). Heme-binding residues include tyrosine 229, arginine 249, histidine 283, tyrosine 285, and lysine 319. Residues 386–460 are disordered; the sequence is LRQDTPEPPP…ANETPSEVAK (75 aa). The segment covering 399–410 has biased composition (low complexity); sequence PPAQASPPTTET. The span at 416–429 shows a compositional bias: basic and acidic residues; the sequence is EVAKTAAEDAKKAE. The span at 430–439 shows a compositional bias: low complexity; that stretch reads APVAADAPAT. Positions 449 to 460 are enriched in polar residues; sequence SSANETPSEVAK.

It belongs to the SFH5 family. The cofactor is heme b.

Its subcellular location is the cytoplasm. It is found in the endoplasmic reticulum membrane. The protein localises to the microsome membrane. The catalysed reaction is a 1,2-diacyl-sn-glycero-3-phospho-(1D-myo-inositol)(in) = a 1,2-diacyl-sn-glycero-3-phospho-(1D-myo-inositol)(out). Non-classical phosphatidylinositol (PtdIns) transfer protein (PITP), which exhibits PtdIns-binding/transfer activity in the absence of detectable PtdCho-binding/transfer activity. Regulates PtdIns(4,5)P2 homeostasis at the plasma membrane. Heme-binding protein that may play a role in organic oxidant-induced stress responses. This is Phosphatidylinositol transfer protein SFH5 (SFH5) from Ajellomyces capsulatus (strain NAm1 / WU24) (Darling's disease fungus).